The following is a 238-amino-acid chain: uncharacterized protein (238 aa).

7 helical membrane passes run 19–39 (FIYG…LLGW), 64–84 (WSVI…IYNW), 85–105 (QVLY…YFTK), 112–132 (LWND…SYYF), 141–161 (ILWV…YVKS), 176–196 (VIFH…ILAL), and 218–238 (VGLI…VATL).

It to B.subtilis YwiC.

It is found in the cell membrane. This is an uncharacterized protein from Haemophilus influenzae (strain ATCC 51907 / DSM 11121 / KW20 / Rd).